A 161-amino-acid polypeptide reads, in one-letter code: Bacterial E2-like ubiquitin protein BilB (161 aa).

The active-site Glycyl thioester intermediate is Cys113.

Functionally, component of the Bil (bacterial ISG15-like) antiviral defense system, composed of BilA, BilB, BilC and BilD. The Bil system specifically conjugates a ubiquitin-like moiety (bilA) to the bacteriophage central tail fiber (CTF, or tip attachment protein J) via reactions involving E1 (bilD) and E2 (bilB). Modifies CTF of phage SECphi27 and SECphi4, which probably interferes with assembly of the phage tail. Also modifies T5 baseplate hub protein pb3 (gene D16), but not gp27 of phage T6 (Bil defends against T6). BilB probably accepts ubiquitin from the BilA-BilD (E1) complex and catalyzes its covalent attachment to target protein (CTF). Bil-encoding bacteria produce mostly defective phage SECphi27, many of which have phage assembly defects, including no tails. SECphi27 phage progeny produced in E.coli with the Bil system inject less DNA into naive host cells, maybe because the phage are less able to adsorb and inject their DNA into host cells. Expression of the Bil system in E.coli (strain MG1655) confers about 100-fold resistance to phage SECphi27, SECphi18, SECphi6, SECphi4 and T5, but not to SECphi17. When cells expressing the Bil system are infected by phage SECphi27 at low multiplicity of infection (0.03 MOI) the culture survives, at 3.0 MOI the culture collapses at the same time as cells without the Bil system. The polypeptide is Bacterial E2-like ubiquitin protein BilB (Collimonas sp. (strain OK412)).